We begin with the raw amino-acid sequence, 386 residues long: Probable zinc transporter zrg17 (386 aa).

The next 6 membrane-spanning stretches (helical) occupy residues 102 to 122 (ILFF…ILLT), 128 to 148 (IVEG…SFLV), 163 to 183 (MELL…MNLL), 208 to 228 (VHIH…FALL), 243 to 263 (FFHG…SLGY), and 268 to 288 (FLSH…GFSI).

It belongs to the cation diffusion facilitator (CDF) transporter (TC 2.A.4) family. SLC30A subfamily. Interacts with cis4.

It localises to the cytoplasm. The protein localises to the nucleus membrane. Probable transporter involved in the regulation of zinc homeostasis. This Schizosaccharomyces pombe (strain 972 / ATCC 24843) (Fission yeast) protein is Probable zinc transporter zrg17 (zrg17).